The primary structure comprises 468 residues: Tyrosine phenol-lyase (468 aa).

Residue Lys-260 is modified to N6-(pyridoxal phosphate)lysine.

This sequence belongs to the beta-eliminating lyase family. Homotetramer. Pyridoxal 5'-phosphate is required as a cofactor.

The enzyme catalyses L-tyrosine + H2O = phenol + pyruvate + NH4(+). The chain is Tyrosine phenol-lyase from Lacrimispora saccharolytica (strain ATCC 35040 / DSM 2544 / NRCC 2533 / WM1) (Clostridium saccharolyticum).